Reading from the N-terminus, the 257-residue chain is tRNA pseudouridine synthase A (257 aa).

Residue aspartate 53 is the Nucleophile of the active site. Residue tyrosine 111 coordinates substrate.

The protein belongs to the tRNA pseudouridine synthase TruA family. Homodimer.

It catalyses the reaction uridine(38/39/40) in tRNA = pseudouridine(38/39/40) in tRNA. Its function is as follows. Formation of pseudouridine at positions 38, 39 and 40 in the anticodon stem and loop of transfer RNAs. This chain is tRNA pseudouridine synthase A, found in Xylella fastidiosa (strain M12).